The following is a 136-amino-acid chain: Peptide methionine sulfoxide reductase MsrB (136 aa).

In terms of domain architecture, MsrB spans 7–129; the sequence is SSSHENTLTE…NSASLSFTDD (123 aa). Residues C46, C49, C95, and C98 each coordinate Zn(2+). Catalysis depends on C118, which acts as the Nucleophile.

The protein belongs to the MsrB Met sulfoxide reductase family. The cofactor is Zn(2+).

The enzyme catalyses L-methionyl-[protein] + [thioredoxin]-disulfide + H2O = L-methionyl-(R)-S-oxide-[protein] + [thioredoxin]-dithiol. This chain is Peptide methionine sulfoxide reductase MsrB, found in Erwinia tasmaniensis (strain DSM 17950 / CFBP 7177 / CIP 109463 / NCPPB 4357 / Et1/99).